The chain runs to 353 residues: Galectin-9 (353 aa).

One can recognise a Galectin 1 domain in the interval Phe-17–Gln-147. A beta-D-galactoside is bound by residues Asn-47, His-60, Arg-64, Asn-74, and Trp-81–Lys-87. The tract at residues Gln-167–His-186 is disordered. Positions Phe-225–Thr-353 constitute a Galectin 2 domain. A beta-D-galactoside-binding positions include His-265, Arg-269, Thr-279, and Trp-285 to Ser-291.

Homodimer. Accentuated expression in liver and thymus of embryo, detected in embryonic heart, brain, lung, liver, and kidney. Highly expressed in adult thymus, small intestine, and liver, and to a lesser extent in lung, kidney, spleen, cardiac, and skeletal muscle. Barely detectable in brain and reticulocyte. Expressed in placenta, uterus and decidua during pregnancy. Expressed in CD4+ T-cells with higher levels in iTreg cells than other T-cell types and sustained high levels throughout iTreg cell differentiation (at protein level). Expressed in myeloid cells in lung. Constitutively expressed in microglia. Isoform 1 is expressed exclusively in the small intestine. Isoform 2 expression in decidua increases in pathological pregnancy from gestation day 7.5 to 13.5 and it is higher than in normal pregnancy. Isoform 3 expression in decidua is higher in normal pregnancy than in pathological pregnancy.

The protein localises to the cytoplasm. It is found in the nucleus. Its subcellular location is the secreted. Binds galactosides. Has high affinity for the Forssman pentasaccharide. Ligand for HAVCR2/TIM3. Binding to HAVCR2 induces T-helper type 1 lymphocyte (Th1) death. Also stimulates bactericidal activity in infected macrophages by causing macrophage activation and IL1B secretion which restricts intracellular bacterial growth. Ligand for P4HB; the interaction retains P4HB at the cell surface of Th2 T-helper cells, increasing disulfide reductase activity at the plasma membrane, altering the plasma membrane redox state and enhancing cell migration. Ligand for CD44; the interaction enhances binding of SMAD3 to the FOXP3 promoter, leading to up-regulation of FOXP3 expression and increased induced regulatory T (iTreg) cell stability and suppressive function. Promotes ability of mesenchymal stromal cells to suppress T-cell proliferation. Expands regulatory T-cells and induces cytotoxic T-cell apoptosis following virus infection. Activates ERK1/2 phosphorylation inducing cytokine (IL-6, IL-8, IL-12) and chemokine (CCL2) production in mast and dendritic cells. Inhibits degranulation and induces apoptosis of mast cells. Induces maturation and migration of dendritic cells. Inhibits natural killer (NK) cell function. Can transform NK cell phenotype from peripheral to decidual during pregnancy. Astrocyte derived galectin-9 enhances microglial TNF production. May play a role in thymocyte-epithelial interactions relevant to the biology of the thymus. May provide the molecular basis for urate flux across cell membranes, allowing urate that is formed during purine metabolism to efflux from cells and serving as an electrogenic transporter that plays an important role in renal and gastrointestinal urate excretion. Highly selective to the anion urate. Functionally, acts as an eosinophil chemoattractant. It also inhibits angiogenesis. Suppresses IFNG production by natural killer cells. In Mus musculus (Mouse), this protein is Galectin-9 (Lgals9).